The primary structure comprises 260 residues: Endonuclease NucS (260 aa).

It belongs to the NucS endonuclease family.

The protein resides in the cytoplasm. Functionally, cleaves both 3' and 5' ssDNA extremities of branched DNA structures. In Methanopyrus kandleri (strain AV19 / DSM 6324 / JCM 9639 / NBRC 100938), this protein is Endonuclease NucS.